The following is a 417-amino-acid chain: Equilibrative nucleotide transporter 7 (417 aa).

11 helical membrane passes run Leu-19 to Thr-39, Val-54 to Glu-74, Ile-84 to Ser-104, Val-110 to Val-130, Pro-143 to Leu-163, Leu-184 to Phe-204, Leu-264 to Tyr-284, Gly-293 to Pro-315, Lys-326 to Ala-346, Trp-353 to Phe-373, and Met-392 to Ile-412.

This sequence belongs to the SLC29A/ENT transporter (TC 2.A.57) family. In terms of tissue distribution, expressed in leaves and flowers.

Its subcellular location is the cell membrane. Its function is as follows. Nucleoside transporter that can mediate uptake of adenosine, uridine, guanosine or cytidine when expressed in a heterologous system (yeast). The polypeptide is Equilibrative nucleotide transporter 7 (ENT7) (Arabidopsis thaliana (Mouse-ear cress)).